Reading from the N-terminus, the 83-residue chain is Small ribosomal subunit protein bS18 (83 aa).

The protein belongs to the bacterial ribosomal protein bS18 family. As to quaternary structure, part of the 30S ribosomal subunit. Forms a tight heterodimer with protein bS6.

Functionally, binds as a heterodimer with protein bS6 to the central domain of the 16S rRNA, where it helps stabilize the platform of the 30S subunit. The protein is Small ribosomal subunit protein bS18 of Desulfosudis oleivorans (strain DSM 6200 / JCM 39069 / Hxd3) (Desulfococcus oleovorans).